Reading from the N-terminus, the 910-residue chain is Protein translocase subunit SecA (910 aa).

ATP-binding positions include glutamine 89, 107–111 (GEGKT), and aspartate 502. Zn(2+)-binding residues include cysteine 889, cysteine 891, cysteine 900, and histidine 901.

Belongs to the SecA family. As to quaternary structure, monomer and homodimer. Part of the essential Sec protein translocation apparatus which comprises SecA, SecYEG and auxiliary proteins SecDF-YajC and YidC. Zn(2+) serves as cofactor.

It is found in the cell inner membrane. The protein resides in the cytoplasm. It carries out the reaction ATP + H2O + cellular proteinSide 1 = ADP + phosphate + cellular proteinSide 2.. Functionally, part of the Sec protein translocase complex. Interacts with the SecYEG preprotein conducting channel. Has a central role in coupling the hydrolysis of ATP to the transfer of proteins into and across the cell membrane, serving both as a receptor for the preprotein-SecB complex and as an ATP-driven molecular motor driving the stepwise translocation of polypeptide chains across the membrane. This chain is Protein translocase subunit SecA, found in Bartonella bacilliformis (strain ATCC 35685 / KC583 / Herrer 020/F12,63).